A 273-amino-acid polypeptide reads, in one-letter code: Glutamate racemase (273 aa).

Residues 9–10 (DS) and 41–42 (YG) each bind substrate. Catalysis depends on C73, which acts as the Proton donor/acceptor. A substrate-binding site is contributed by 74-75 (NT). C183 acts as the Proton donor/acceptor in catalysis. 184 to 185 (TH) is a substrate binding site.

Belongs to the aspartate/glutamate racemases family.

The catalysed reaction is L-glutamate = D-glutamate. It functions in the pathway cell wall biogenesis; peptidoglycan biosynthesis. In terms of biological role, provides the (R)-glutamate required for cell wall biosynthesis. The polypeptide is Glutamate racemase (Shewanella sp. (strain ANA-3)).